The chain runs to 111 residues: Cytochrome c (111 aa).

Ala-1 carries the N-acetylalanine modification. Cys-22, Cys-25, and His-26 together coordinate heme c. The residue at position 80 (Lys-80) is an N6,N6,N6-trimethyllysine. Residue Met-88 coordinates heme c. Lys-94 carries the N6,N6,N6-trimethyllysine modification.

It belongs to the cytochrome c family. Binds 1 heme c group covalently per subunit.

The protein localises to the mitochondrion intermembrane space. Functionally, electron carrier protein. The oxidized form of the cytochrome c heme group can accept an electron from the heme group of the cytochrome c1 subunit of cytochrome reductase. Cytochrome c then transfers this electron to the cytochrome oxidase complex, the final protein carrier in the mitochondrial electron-transport chain. The protein is Cytochrome c of Gossypium barbadense (Sea Island cotton).